The sequence spans 431 residues: Large envelope protein (431 aa).

The N-myristoyl glycine; by host moiety is linked to residue Gly-2. The segment at 2–148 (GNNIKVTFNP…PPLRDTHPHL (147 aa)) is pre-S1. The pre-S stretch occupies residues 2 to 207 (GNNIKVTFNP…PSTTGDPALS (206 aa)). Over 2 to 214 (GNNIKVTFNP…ALSPEMSPSS (213 aa)) the chain is Virion surface; in external conformation. The Intravirion; in internal conformation portion of the chain corresponds to 2 to 286 (GNNIKVTFNP…NGFRWMYLRR (285 aa)). N-linked (GlcNAc...) asparagine glycosylation occurs at Asn-3. The tract at residues 115–147 (IPRGLVPPQTPTNRDQGRKPTPPTPPLRDTHPH) is disordered. Positions 149-207 (TMKNQTFHLQGFVDGLRDLTTTERQHNAYGDPFTTLSPAVPTVSTILSPPSTTGDPALS) are pre-S2. Residues 215 to 235 (LLGLLAGLQVVYFLWTKILTI) traverse the membrane as a helical segment. Over 236-286 (AQNLDWWWTSLSFPGGIPECTGQNSQFQTCKHLPTSCPPTCNGFRWMYLRR) the chain is Intravirion; in external conformation. A helical membrane pass occupies residues 287 to 307 (FIIYLLVLLLCLIFLLVLLDW). Residues 308 to 379 (KGLIPVCPLQ…WALARFSWLN (72 aa)) are Virion surface-facing. Asn-351 is a glycosylation site (N-linked (GlcNAc...) asparagine; by host). The chain crosses the membrane as a helical span at residues 380 to 400 (LLVPLLQWLGGISLIAWFLLI). The Intravirion segment spans residues 401-406 (WMIWFW). A helical transmembrane segment spans residues 407-429 (GPALLSILPPFIPIFVLFFLIWV). Residues 430–431 (YI) are Virion surface-facing.

Belongs to the orthohepadnavirus major surface antigen family. As to quaternary structure, in its internal form (Li-HBsAg), interacts with the capsid protein and with the isoform S. Interacts with host chaperone CANX. Associates with host chaperone CANX through its pre-S2 N glycan; this association may be essential for isoform M proper secretion. In terms of assembly, interacts with isoform L. Interacts with the antigens of satellite virus HDV (HDVAgs); this interaction is required for encapsidation of HDV genomic RNA. Post-translationally, isoform M is N-terminally acetylated by host at a ratio of 90%, and N-glycosylated by host at the pre-S2 region. In terms of processing, myristoylated.

Its subcellular location is the virion membrane. In terms of biological role, the large envelope protein exists in two topological conformations, one which is termed 'external' or Le-HBsAg and the other 'internal' or Li-HBsAg. In its external conformation the protein attaches the virus to cell receptors and thereby initiating infection. This interaction determines the species specificity and liver tropism. This attachment induces virion internalization predominantly through caveolin-mediated endocytosis. The large envelope protein also assures fusion between virion membrane and endosomal membrane. In its internal conformation the protein plays a role in virion morphogenesis and mediates the contact with the nucleocapsid like a matrix protein. Its function is as follows. The middle envelope protein plays an important role in the budding of the virion. It is involved in the induction of budding in a nucleocapsid independent way. In this process the majority of envelope proteins bud to form subviral lipoprotein particles of 22 nm of diameter that do not contain a nucleocapsid. The chain is Large envelope protein from Woodchuck hepatitis B virus (isolate 7) (WHV).